Consider the following 339-residue polypeptide: Uroporphyrinogen decarboxylase (339 aa).

Residues 21-25, F40, D71, Y147, S202, and H315 each bind substrate; that span reads RQAGR.

This sequence belongs to the uroporphyrinogen decarboxylase family. Homodimer.

It is found in the cytoplasm. It carries out the reaction uroporphyrinogen III + 4 H(+) = coproporphyrinogen III + 4 CO2. It functions in the pathway porphyrin-containing compound metabolism; protoporphyrin-IX biosynthesis; coproporphyrinogen-III from 5-aminolevulinate: step 4/4. Catalyzes the decarboxylation of four acetate groups of uroporphyrinogen-III to yield coproporphyrinogen-III. This is Uroporphyrinogen decarboxylase from Helicobacter pylori (strain ATCC 700392 / 26695) (Campylobacter pylori).